The sequence spans 201 residues: CDP-diacylglycerol--serine O-phosphatidyltransferase (201 aa).

6 helical membrane passes run isoleucine 19 to isoleucine 39, phenylalanine 57 to leucine 77, leucine 88 to leucine 108, glycine 112 to isoleucine 132, asparagine 133 to isoleucine 153, and isoleucine 162 to alanine 182.

It belongs to the CDP-alcohol phosphatidyltransferase class-I family.

Its subcellular location is the cell membrane. The catalysed reaction is a CDP-1,2-diacyl-sn-glycerol + L-serine = a 1,2-diacyl-sn-glycero-3-phospho-L-serine + CMP + H(+). This Methanocaldococcus jannaschii (strain ATCC 43067 / DSM 2661 / JAL-1 / JCM 10045 / NBRC 100440) (Methanococcus jannaschii) protein is CDP-diacylglycerol--serine O-phosphatidyltransferase (pssA).